Reading from the N-terminus, the 401-residue chain is Argininosuccinate synthase (401 aa).

8 to 16 lines the ATP pocket; that stretch reads AYSGGLDTS. Tyr-85 is an L-citrulline binding site. Gly-115 provides a ligand contact to ATP. Positions 117, 121, and 122 each coordinate L-aspartate. Residue Asn-121 participates in L-citrulline binding. 4 residues coordinate L-citrulline: Arg-125, Ser-173, Glu-258, and Tyr-270.

It belongs to the argininosuccinate synthase family. Type 1 subfamily. In terms of assembly, homotetramer.

The protein localises to the cytoplasm. The enzyme catalyses L-citrulline + L-aspartate + ATP = 2-(N(omega)-L-arginino)succinate + AMP + diphosphate + H(+). It functions in the pathway amino-acid biosynthesis; L-arginine biosynthesis; L-arginine from L-ornithine and carbamoyl phosphate: step 2/3. In Staphylococcus epidermidis (strain ATCC 35984 / DSM 28319 / BCRC 17069 / CCUG 31568 / BM 3577 / RP62A), this protein is Argininosuccinate synthase.